Consider the following 309-residue polypeptide: Curved DNA-binding protein (309 aa).

The 65-residue stretch at 5–69 (DYYAILGVKP…ERRAEYDQLR (65 aa)) folds into the J domain.

The protein resides in the cytoplasm. The protein localises to the nucleoid. Its function is as follows. DNA-binding protein that preferentially recognizes a curved DNA sequence. It is probably a functional analog of DnaJ; displays overlapping activities with DnaJ, but functions under different conditions, probably acting as a molecular chaperone in an adaptive response to environmental stresses other than heat shock. Lacks autonomous chaperone activity; binds native substrates and targets them for recognition by DnaK. Its activity is inhibited by the binding of CbpM. The chain is Curved DNA-binding protein from Serratia proteamaculans (strain 568).